Reading from the N-terminus, the 481-residue chain is UDP-glycosyltransferase 72E3 (481 aa).

Catalysis depends on histidine 18, which acts as the Proton acceptor. Histidine 18 is a binding site for an anthocyanidin. The active-site Charge relay is the aspartate 111. UDP-alpha-D-glucose is bound by residues alanine 346, glutamine 348, histidine 363, tryptophan 366, serine 368, and glutamate 371. Residue alanine 386 coordinates an anthocyanidin. 2 residues coordinate UDP-alpha-D-glucose: glutamate 387 and glutamine 388.

Belongs to the UDP-glycosyltransferase family. In terms of tissue distribution, expressed in seedlings and roots, and at lower levels in flowers and siliques.

The enzyme catalyses (E)-4-coumarate + UDP-alpha-D-glucose = 4-O-(beta-D-glucosyl)-trans-4-coumarate + UDP + H(+). It catalyses the reaction (E)-sinapyl alcohol + UDP-alpha-D-glucose = 4-O-(beta-D-glucosyl)-trans-4-sinapoyl alcohol + UDP + H(+). It carries out the reaction (E)-coniferol + UDP-alpha-D-glucose = 4-O-(beta-D-glucosyl)-(E)-coniferol + UDP + H(+). The catalysed reaction is (E)-sinapate + UDP-alpha-D-glucose = 4-O-(beta-D-glucosyl)-trans-sinapate + UDP + H(+). The enzyme catalyses (E)-coniferaldehyde + UDP-alpha-D-glucose = 4-O-(beta-D-glucosyl)-4-(E)-coniferyl aldehyde + UDP + H(+). It catalyses the reaction (E)-sinapaldehyde + UDP-alpha-D-glucose = 4-O-(beta-D-glucosyl)-4-trans-sinapoyl aldehyde + UDP + H(+). Functionally, involved in the O-glucosylation of monolignols (alcohol monomers of lignin). Glucosylates coniferyl alcohol to form coniferyl alcohol 4-O-glucoside. Glucosylates sinapyl alcohol to form sinapyl alcohol 4-O-glucoside. Possesses low activity with sinapate as substrate. The polypeptide is UDP-glycosyltransferase 72E3 (Arabidopsis thaliana (Mouse-ear cress)).